The sequence spans 377 residues: N-acetyldiaminopimelate deacetylase (377 aa).

Residue Asp70 is part of the active site. Glu129 acts as the Proton acceptor in catalysis.

Belongs to the peptidase M20A family. N-acetyldiaminopimelate deacetylase subfamily.

The catalysed reaction is N-acetyl-(2S,6S)-2,6-diaminopimelate + H2O = (2S,6S)-2,6-diaminopimelate + acetate. The protein operates within amino-acid biosynthesis; L-lysine biosynthesis via DAP pathway; LL-2,6-diaminopimelate from (S)-tetrahydrodipicolinate (acetylase route): step 3/3. In terms of biological role, catalyzes the conversion of N-acetyl-diaminopimelate to diaminopimelate and acetate. In Streptococcus thermophilus (strain CNRZ 1066), this protein is N-acetyldiaminopimelate deacetylase.